A 105-amino-acid chain; its full sequence is U2-lycotoxin-Ls1a (105 aa).

The signal sequence occupies residues 1–17; sequence MIKYVLISALLVVAVYS. Residues 18–41 constitute a propeptide that is removed on maturation; the sequence is FTIEDNEDALLEEAEDELDTEEER. 4 disulfides stabilise this stretch: C51/C67, C58/C97, C60/C83, and C69/C81.

The protein belongs to the neurotoxin 04 (omega-agtx) family. 01 (type I omega-agtx) subfamily. As to expression, expressed by the venom gland.

It is found in the secreted. In terms of biological role, insecticidal to house crickets. It induces an excitatory slow-onset impact that leads to irreversible spastic paralysis. It also modifies human voltage-gated potassium channel Kv1.5/KCNA5. Most likely, it binds to the voltage-sensing domain of the channel, suggesting it does not block the pore but prevents its opening at physiological membrane potentials. The recombinant peptide binds to the channel in an irreversible manner and slows down the hKv1.5 current activation kinetics. It is not toxic to mice, when intracranially injected (at 0.5 ug/g mouse). The sequence is that of U2-lycotoxin-Ls1a from Lycosa singoriensis (Wolf spider).